The following is a 285-amino-acid chain: Lipoyl synthase (285 aa).

The [4Fe-4S] cluster site is built by Cys-36, Cys-41, Cys-47, Cys-62, Cys-66, Cys-69, and Ser-275. One can recognise a Radical SAM core domain in the interval 48–264 (FSKKTATFLI…KEYAISIGFK (217 aa)).

It belongs to the radical SAM superfamily. Lipoyl synthase family. [4Fe-4S] cluster is required as a cofactor.

The protein resides in the cytoplasm. It catalyses the reaction [[Fe-S] cluster scaffold protein carrying a second [4Fe-4S](2+) cluster] + N(6)-octanoyl-L-lysyl-[protein] + 2 oxidized [2Fe-2S]-[ferredoxin] + 2 S-adenosyl-L-methionine + 4 H(+) = [[Fe-S] cluster scaffold protein] + N(6)-[(R)-dihydrolipoyl]-L-lysyl-[protein] + 4 Fe(3+) + 2 hydrogen sulfide + 2 5'-deoxyadenosine + 2 L-methionine + 2 reduced [2Fe-2S]-[ferredoxin]. It functions in the pathway protein modification; protein lipoylation via endogenous pathway; protein N(6)-(lipoyl)lysine from octanoyl-[acyl-carrier-protein]: step 2/2. Catalyzes the radical-mediated insertion of two sulfur atoms into the C-6 and C-8 positions of the octanoyl moiety bound to the lipoyl domains of lipoate-dependent enzymes, thereby converting the octanoylated domains into lipoylated derivatives. The polypeptide is Lipoyl synthase (Caldicellulosiruptor saccharolyticus (strain ATCC 43494 / DSM 8903 / Tp8T 6331)).